Consider the following 257-residue polypeptide: Glutamate racemase (257 aa).

Substrate-binding positions include 12–13 (DS) and 44–45 (YG). Cys75 acts as the Proton donor/acceptor in catalysis. 76–77 (NT) is a binding site for substrate. Cys185 serves as the catalytic Proton donor/acceptor. 186-187 (TH) lines the substrate pocket.

It belongs to the aspartate/glutamate racemases family.

It catalyses the reaction L-glutamate = D-glutamate. The protein operates within cell wall biogenesis; peptidoglycan biosynthesis. In terms of biological role, provides the (R)-glutamate required for cell wall biosynthesis. This is Glutamate racemase from Clostridium botulinum (strain Kyoto / Type A2).